We begin with the raw amino-acid sequence, 37 residues long: Large ribosomal subunit protein bL36 (37 aa).

It belongs to the bacterial ribosomal protein bL36 family.

The sequence is that of Large ribosomal subunit protein bL36 from Synechococcus sp. (strain CC9311).